Here is a 348-residue protein sequence, read N- to C-terminus: Ion-translocating oxidoreductase complex subunit D (348 aa).

Helical transmembrane passes span 15–35, 36–56, 67–87, 88–108, and 125–145; these read LTAK…GMQA, YFFG…AVAI, PTAF…LAIS, IPPY…LLLA, and VAYA…LVPI. Thr-186 is modified (FMN phosphoryl threonine). 5 helical membrane passes run 212-232, 241-261, 265-285, 298-318, and 320-340; these read LFAN…LLLI, IPAA…LLLP, LNVV…FIAT, LIFG…GNYP, and AVAF…HYTQ.

This sequence belongs to the NqrB/RnfD family. The complex is composed of six subunits: RnfA, RnfB, RnfC, RnfD, RnfE and RnfG. It depends on FMN as a cofactor.

Its subcellular location is the cell inner membrane. Functionally, part of a membrane-bound complex that couples electron transfer with translocation of ions across the membrane. This chain is Ion-translocating oxidoreductase complex subunit D, found in Actinobacillus pleuropneumoniae serotype 5b (strain L20).